The primary structure comprises 341 residues: Anthranilate phosphoribosyltransferase (341 aa).

Residues Gly-81, 84 to 85, 91 to 94, 109 to 117, and Ser-121 each bind 5-phospho-alpha-D-ribose 1-diphosphate; these read GD, NVST, and KHGNRSVSS. Gly-81 contributes to the anthranilate binding site. Ser-93 is a Mg(2+) binding site. Asn-112 contributes to the anthranilate binding site. Arg-167 provides a ligand contact to anthranilate. Mg(2+) is bound by residues Asp-226 and Glu-227.

It belongs to the anthranilate phosphoribosyltransferase family. As to quaternary structure, homodimer. The cofactor is Mg(2+).

It catalyses the reaction N-(5-phospho-beta-D-ribosyl)anthranilate + diphosphate = 5-phospho-alpha-D-ribose 1-diphosphate + anthranilate. Its pathway is amino-acid biosynthesis; L-tryptophan biosynthesis; L-tryptophan from chorismate: step 2/5. Functionally, catalyzes the transfer of the phosphoribosyl group of 5-phosphorylribose-1-pyrophosphate (PRPP) to anthranilate to yield N-(5'-phosphoribosyl)-anthranilate (PRA). The chain is Anthranilate phosphoribosyltransferase from Teredinibacter turnerae (strain ATCC 39867 / T7901).